Consider the following 633-residue polypeptide: Chaperone protein HtpG (633 aa).

Positions 1-344 (MSLQPQAETL…SNDLPLNISR (344 aa)) are a; substrate-binding. The tract at residues 345-560 (ELLQSNEVIN…ENEMSGHLQR (216 aa)) is b. The tract at residues 561–633 (LLIQTGQDFM…KGLNELLLDS (73 aa)) is c.

The protein belongs to the heat shock protein 90 family. Homodimer.

Its subcellular location is the cytoplasm. Its function is as follows. Molecular chaperone. Has ATPase activity. The polypeptide is Chaperone protein HtpG (Coxiella burnetii (strain RSA 331 / Henzerling II)).